Here is a 424-residue protein sequence, read N- to C-terminus: MKILKKKKKGNQQIVPDERYRELDSHAPNENEIADEAPMSRKILYYLKLVYHEIRENITIYLLIILYLCVCVMNKIMAKRTLKKIGNYSFVTSETHNTICMVVFFSLYFIFGRRVTSAKERHQNFGLQFLLISLLDACSVIIAFIGLTRTTGNIQSFVMQLSIPINMFFCFLILRYRYHLFNYVGASIIVLTIAIVEFILSFETQEENSIVFNLVLIASLIPMSFSNMTREIVFKKYKINILRLNAVVSFFQIFTSCLMLPMYTLPFLKQINLPFSEIGTNIKNGFRCLILGQNTIVENCGLGMAKMCDDCEGAWKTFLAYSFFNICDNLITSFIIDKFSTMTYTIVSCIQGPAIAIAYYFKFLAGDAVMKPRVLDFVTLFGYLFGSIIYRVGNIILEKKKMMEAGNDDDSEGELTNAESIITQ.

Over 1–57 (MKILKKKKKGNQQIVPDERYRELDSHAPNENEIADEAPMSRKILYYLKLVYHEIREN) the chain is Cytoplasmic. Residues 58 to 78 (ITIYLLIILYLCVCVMNKIMA) form a helical membrane-spanning segment. Residues 79–89 (KRTLKKIGNYS) are Vacuolar-facing. N87 is a glycosylation site (N-linked (GlcNAc...) asparagine). Residues 90–110 (FVTSETHNTICMVVFFSLYFI) form a helical membrane-spanning segment. Topologically, residues 111-124 (FGRRVTSAKERHQN) are cytoplasmic. Residues 125-145 (FGLQFLLISLLDACSVIIAFI) form a helical membrane-spanning segment. The Vacuolar segment spans residues 146–153 (GLTRTTGN). The helical transmembrane segment at 154-174 (IQSFVMQLSIPINMFFCFLIL) threads the bilayer. At 175-179 (RYRYH) the chain is on the cytoplasmic side. The helical transmembrane segment at 180-200 (LFNYVGASIIVLTIAIVEFIL) threads the bilayer. Residues 201-208 (SFETQEEN) lie on the Vacuolar side of the membrane. The chain crosses the membrane as a helical span at residues 209–229 (SIVFNLVLIASLIPMSFSNMT). Residues 230 to 246 (REIVFKKYKINILRLNA) are Cytoplasmic-facing. The chain crosses the membrane as a helical span at residues 247–267 (VVSFFQIFTSCLMLPMYTLPF). The Vacuolar portion of the chain corresponds to 268 to 316 (LKQINLPFSEIGTNIKNGFRCLILGQNTIVENCGLGMAKMCDDCEGAWK). Cystine bridges form between C288–C311 and C300–C308. Residues 317-337 (TFLAYSFFNICDNLITSFIID) form a helical membrane-spanning segment. Over 338–345 (KFSTMTYT) the chain is Cytoplasmic. A helical transmembrane segment spans residues 346–366 (IVSCIQGPAIAIAYYFKFLAG). The Vacuolar segment spans residues 367–376 (DAVMKPRVLD). The chain crosses the membrane as a helical span at residues 377–397 (FVTLFGYLFGSIIYRVGNIIL). The Cytoplasmic segment spans residues 398-424 (EKKKMMEAGNDDDSEGELTNAESIITQ).

This sequence belongs to the CRT-like transporter family.

It localises to the vacuole membrane. In terms of biological role, nutrient transporter. Involved in maintaining the osmotic homeostasis of the digestive vacuole. This is Putative chloroquine resistance transporter from Plasmodium knowlesi.